The chain runs to 214 residues: Cytochrome b (214 aa).

The next 4 membrane-spanning stretches (helical) occupy residues F31 to F51, W75 to I96, W111 to L131, and F176 to L196. Heme b is bound by residues H81 and H95. Positions 180 and 194 each coordinate heme b. An a ubiquinone-binding site is contributed by H199.

It belongs to the cytochrome b family. As to quaternary structure, the cytochrome bc1 complex contains 3 respiratory subunits (MT-CYB, CYC1 and UQCRFS1), 2 core proteins (UQCRC1 and UQCRC2) and probably 6 low-molecular weight proteins. The cofactor is heme b.

It localises to the mitochondrion inner membrane. In terms of biological role, component of the ubiquinol-cytochrome c reductase complex (complex III or cytochrome b-c1 complex) that is part of the mitochondrial respiratory chain. The b-c1 complex mediates electron transfer from ubiquinol to cytochrome c. Contributes to the generation of a proton gradient across the mitochondrial membrane that is then used for ATP synthesis. The chain is Cytochrome b (MT-CYB) from Gloydius blomhoffii (Mamushi).